Here is a 460-residue protein sequence, read N- to C-terminus: V-type ATP synthase beta chain (460 aa).

It belongs to the ATPase alpha/beta chains family.

Functionally, produces ATP from ADP in the presence of a proton gradient across the membrane. The V-type beta chain is a regulatory subunit. In Clostridium novyi (strain NT), this protein is V-type ATP synthase beta chain.